The primary structure comprises 400 residues: Transcription initiation factor IIF subunit beta (400 aa).

Over residues 1-19 (MSSGSAGAPALSNNSTNSV) the composition is skewed to polar residues. Residues 1-47 (MSSGSAGAPALSNNSTNSVAKEKSGNISGDEYLSQEEEVFDGNDIEN) form a disordered region. Residues serine 28, serine 34, and serine 56 each carry the phosphoserine modification. Residues 33–47 (LSQEEEVFDGNDIEN) show a composition bias toward acidic residues. 2 disordered regions span residues 165-194 (QERE…VMTD) and 366-400 (TLGE…EDVV). The segment covering 174-189 (KQQQQKRRNNRKKFNH) has biased composition (basic residues). Over residues 386-400 (AEADLEDEIEMEDVV) the composition is skewed to acidic residues.

It belongs to the TFIIF beta subunit family. In terms of assembly, TFIIF is composed of three different subunits: TFG1/RAP74, TFG2/RAP30 and TAF14.

Its subcellular location is the nucleus. TFIIF is a general transcription initiation factor that binds to RNA polymerase II. Its functions include the recruitment of RNA polymerase II to the promoter bound DNA-TBP-TFIIB complex, decreasing the affinity of RNA polymerase II for non-specific DNA, allowing for the subsequent recruitment of TFIIE and TFIIH, and facilitating RNA polymerase II elongation. This chain is Transcription initiation factor IIF subunit beta (TFG2), found in Saccharomyces cerevisiae (strain ATCC 204508 / S288c) (Baker's yeast).